The following is a 186-amino-acid chain: Putative 5'(3')-deoxyribonucleotidase (186 aa).

It belongs to the 5'(3')-deoxyribonucleotidase family. Mg(2+) serves as cofactor.

Dephosphorylates the 5' and 2'(3')-phosphates of deoxyribonucleotides. The chain is Putative 5'(3')-deoxyribonucleotidase from Bordetella parapertussis (strain 12822 / ATCC BAA-587 / NCTC 13253).